We begin with the raw amino-acid sequence, 334 residues long: N-acetyl-gamma-glutamyl-phosphate reductase (334 aa).

Cys154 is a catalytic residue.

The protein belongs to the NAGSA dehydrogenase family. Type 1 subfamily.

Its subcellular location is the cytoplasm. The enzyme catalyses N-acetyl-L-glutamate 5-semialdehyde + phosphate + NADP(+) = N-acetyl-L-glutamyl 5-phosphate + NADPH + H(+). It participates in amino-acid biosynthesis; L-arginine biosynthesis; N(2)-acetyl-L-ornithine from L-glutamate: step 3/4. In terms of biological role, catalyzes the NADPH-dependent reduction of N-acetyl-5-glutamyl phosphate to yield N-acetyl-L-glutamate 5-semialdehyde. This Vibrio parahaemolyticus serotype O3:K6 (strain RIMD 2210633) protein is N-acetyl-gamma-glutamyl-phosphate reductase.